The sequence spans 211 residues: Recombination protein RecR (211 aa).

The C4-type zinc finger occupies 70-85 (CRECFLITDREVCPIC). In terms of domain architecture, Toprim spans 93-190 (KFICVVEESQ…KITRTAYGFQ (98 aa)).

This sequence belongs to the RecR family.

May play a role in DNA repair. It seems to be involved in an RecBC-independent recombinational process of DNA repair. It may act with RecF and RecO. The sequence is that of Recombination protein RecR from Aquifex aeolicus (strain VF5).